The following is a 337-amino-acid chain: m7GpppX diphosphatase (337 aa).

The segment at 1-35 (MADAAPQLGKRKRELDVEEAHAASTEEKEAGVGNG) is disordered. Ala-2 is subject to N-acetylalanine. Residues 10–13 (KRKR) carry the nuclear localization signal (NLS) motif. Over residues 13 to 30 (RELDVEEAHAASTEEKEA) the composition is skewed to basic and acidic residues. Residues Ser-24 and Ser-101 each carry the phosphoserine modification. Lys-138 and Lys-142 each carry N6-acetyllysine. Positions 142–154 (KYLRQDLRLIRET) match the nuclear export sequence (NES) motif. Residues Trp-175, Glu-185, Asp-205, Lys-207, and 268–279 (HYLPSYYHLHVH) each bind substrate. Positions 275–279 (HLHVH) match the Histidine triad motif motif. His-277 (nucleophile) is an active-site residue.

This sequence belongs to the HIT family. As to quaternary structure, homodimer. Associates with components of the exosome multienzyme ribonuclease complex, such as EXOSC3 and EXOSC4. Interacts with NDOR1. As to expression, detected in liver, brain, kidney, testis and prostate.

The protein localises to the cytoplasm. It is found in the nucleus. The enzyme catalyses a 5'-end (N(7)-methyl 5'-triphosphoguanosine)-ribonucleoside in mRNA + H2O = N(7)-methyl-GMP + a 5'-end diphospho-ribonucleoside in mRNA + 2 H(+). With respect to regulation, the hydrolytic product 7-methylguanosine diphosphate (m7GDP) efficiently inhibits the decapping scavenger activity and acts as a competitive inhibitor in vitro. Inhibited by 2,4-diaminoquinazoline. Decapping scavenger enzyme that catalyzes the cleavage of a residual cap structure following the degradation of mRNAs by the 3'-&gt;5' exosome-mediated mRNA decay pathway. Hydrolyzes cap analog structures like 7-methylguanosine nucleoside triphosphate (m7GpppG) with up to 10 nucleotide substrates (small capped oligoribonucleotides) and specifically releases 5'-phosphorylated RNA fragments and 7-methylguanosine monophosphate (m7GMP). Cleaves cap analog structures like tri-methyl guanosine nucleoside triphosphate (m3(2,2,7)GpppG) with very poor efficiency. Does not hydrolyze unmethylated cap analog (GpppG) and shows no decapping activity on intact m7GpppG-capped mRNA molecules longer than 25 nucleotides. Does not hydrolyze 7-methylguanosine diphosphate (m7GDP) to m7GMP. May also play a role in the 5'-&gt;3 mRNA decay pathway; m7GDP, the downstream product released by the 5'-&gt;3' mRNA mediated decapping activity, may be also converted by DCPS to m7GMP. Binds to m7GpppG and strongly to m7GDP. Plays a role in first intron splicing of pre-mRNAs. Inhibits activation-induced cell death. This Homo sapiens (Human) protein is m7GpppX diphosphatase (DCPS).